The sequence spans 373 residues: Probable jasmonic acid carboxyl methyltransferase 1 (373 aa).

Tyr18 contacts S-adenosyl-L-homocysteine. Gln25 is a jasmonate binding site. Residues Cys59, Asn64, Asp96, Leu97, Ser135, and Phe136 each coordinate S-adenosyl-L-homocysteine. His156 and Trp157 together coordinate jasmonate. 4 residues coordinate Mg(2+): Asn174, Asp260, Phe262, and Asn263.

Belongs to the methyltransferase superfamily. Type-7 methyltransferase family. Requires Mg(2+) as cofactor.

It is found in the cytoplasm. Its subcellular location is the nucleus. It catalyses the reaction jasmonate + S-adenosyl-L-methionine = methyl (-)-jasmonate + S-adenosyl-L-homocysteine. The protein operates within lipid metabolism; oxylipin biosynthesis. Functionally, catalyzes the methylation of jasmonate into methyljasmonate, a plant volatile that acts as an important cellular regulator mediating diverse developmental processes and defense responses. The sequence is that of Probable jasmonic acid carboxyl methyltransferase 1 from Theobroma cacao (Cacao).